A 162-amino-acid chain; its full sequence is UPF0305 protein MMP0665 (162 aa).

Belongs to the UPF0305 family.

The sequence is that of UPF0305 protein MMP0665 from Methanococcus maripaludis (strain DSM 14266 / JCM 13030 / NBRC 101832 / S2 / LL).